Reading from the N-terminus, the 378-residue chain is Dihydroorotate dehydrogenase (quinone) (378 aa).

FMN contacts are provided by residues 77–81 (AGFDK) and T101. Residue K81 coordinates substrate. 126-130 (NRMGF) contacts substrate. 2 residues coordinate FMN: N158 and N191. N191 lines the substrate pocket. S194 acts as the Nucleophile in catalysis. N196 contributes to the substrate binding site. FMN contacts are provided by K229 and T257. 258–259 (NT) contacts substrate. FMN-binding positions include G287, G316, and 337 to 338 (YT).

This sequence belongs to the dihydroorotate dehydrogenase family. Type 2 subfamily. Monomer. The cofactor is FMN.

It is found in the cell membrane. The catalysed reaction is (S)-dihydroorotate + a quinone = orotate + a quinol. It participates in pyrimidine metabolism; UMP biosynthesis via de novo pathway; orotate from (S)-dihydroorotate (quinone route): step 1/1. Its function is as follows. Catalyzes the conversion of dihydroorotate to orotate with quinone as electron acceptor. The polypeptide is Dihydroorotate dehydrogenase (quinone) (Synechococcus sp. (strain ATCC 27144 / PCC 6301 / SAUG 1402/1) (Anacystis nidulans)).